A 178-amino-acid chain; its full sequence is Endoribonuclease YbeY (178 aa).

The Zn(2+) site is built by H118, H122, and H128. The interval 156–178 (YQQDRQDERDRRLLDKSRYFDEP) is disordered. The span at 159–178 (DRQDERDRRLLDKSRYFDEP) shows a compositional bias: basic and acidic residues.

Belongs to the endoribonuclease YbeY family. Zn(2+) is required as a cofactor.

It localises to the cytoplasm. Single strand-specific metallo-endoribonuclease involved in late-stage 70S ribosome quality control and in maturation of the 3' terminus of the 16S rRNA. This chain is Endoribonuclease YbeY, found in Mycobacterium marinum (strain ATCC BAA-535 / M).